Reading from the N-terminus, the 417-residue chain is Tumor necrosis factor receptor superfamily member 25 (417 aa).

The signal sequence occupies residues 1-24 (MEQRPRGCAAVAAALLLVLLGARA). Over 25–199 (QGGTRSPRCD…RCAAVCGWRQ (175 aa)) the chain is Extracellular. 4 TNFR-Cys repeats span residues 34-71 (DCAG…STCL), 72-115 (VCPQ…DTRC), 116-163 (GCKP…TDCG), and 164-192 (TCLP…ERCA). Disulfide bonds link cysteine 35–cysteine 47, cysteine 48–cysteine 61, cysteine 51–cysteine 70, cysteine 73–cysteine 89, cysteine 92–cysteine 107, cysteine 95–cysteine 115, cysteine 117–cysteine 130, cysteine 138–cysteine 155, cysteine 141–cysteine 162, cysteine 165–cysteine 176, cysteine 179–cysteine 191, and cysteine 187–cysteine 195. Asparagine 67 carries N-linked (GlcNAc...) asparagine glycosylation. An N-linked (GlcNAc...) asparagine glycan is attached at asparagine 106. Residues 200 to 220 (MFWVQVLLAGLVVPLLLGATL) traverse the membrane as a helical segment. At 221-417 (TYTYRHCWPH…DLRSRLQRGP (197 aa)) the chain is on the cytoplasmic side. Positions 332–413 (GPQLYDVMDA…GCVEDLRSRL (82 aa)) constitute a Death domain. Arginine 352 carries (Microbial infection) N-beta-linked (GlcNAc) arginine glycosylation.

In terms of assembly, homodimer. Interacts strongly via the death domains with TNFRSF1 and TRADD to activate at least two distinct signaling cascades, apoptosis and NF-kappa-B signaling. Interacts with BAG4. (Microbial infection) Glycosylated at Arg-352 by enteropathogenic E.coli protein NleB1. In terms of processing, glycosylated. As to expression, abundantly expressed in thymocytes and lymphocytes. Detected in lymphocyte-rich tissues such as thymus, colon, intestine, and spleen. Also found in the prostate.

It is found in the cell membrane. Its subcellular location is the secreted. Its function is as follows. Receptor for TNFSF12/APO3L/TWEAK. Interacts directly with the adapter TRADD. Mediates activation of NF-kappa-B and induces apoptosis. May play a role in regulating lymphocyte homeostasis. The protein is Tumor necrosis factor receptor superfamily member 25 (TNFRSF25) of Homo sapiens (Human).